Here is an 838-residue protein sequence, read N- to C-terminus: Polyribonucleotide nucleotidyltransferase (838 aa).

Mg(2+)-binding residues include Asp494 and Asp500. The KH domain maps to 561–620; the sequence is PRMESMLIDKGKIKNVIGAGGKNVREICEKTGAKIEISQDGTVMIYAVGREAIESAKDMI. The 68-residue stretch at 630 to 697 folds into the S1 motif domain; it reads GKIYSGEVCE…DKDHIQLSMR (68 aa). Gly residues predominate over residues 747-757; that stretch reads GGASAGRNGRG. Residues 747 to 838 form a disordered region; sequence GGASAGRNGR…PAAPKKPRFF (92 aa). Residues 788–810 are compositionally biased toward low complexity; sequence AGSSGYSSDSSSGNTKSSSSESS. A compositionally biased stretch (gly residues) spans 811-820; sequence GGTGGRGRNG.

Belongs to the polyribonucleotide nucleotidyltransferase family. Mg(2+) is required as a cofactor.

Its subcellular location is the cytoplasm. It catalyses the reaction RNA(n+1) + phosphate = RNA(n) + a ribonucleoside 5'-diphosphate. Functionally, involved in mRNA degradation. Catalyzes the phosphorolysis of single-stranded polyribonucleotides processively in the 3'- to 5'-direction. This chain is Polyribonucleotide nucleotidyltransferase, found in Anaplasma phagocytophilum (strain HZ).